Consider the following 395-residue polypeptide: Zinc finger protein 200 (395 aa).

The segment at 157–208 is disordered; it reads VNGSNPEGEDPEREPVENEDYREKSSDDDEMDSSLVSQQPPDNQEKERLNTS. Basic and acidic residues predominate over residues 169 to 181; the sequence is REPVENEDYREKS. The segment at 246 to 395 is interaction with PRMT3; it reads RRTRRWYTCP…HSACKTRKQK (150 aa). C2H2-type zinc fingers lie at residues 252–274, 280–302, 308–330, 336–358, and 364–386; these read YTCPLCGKQFNESSYLISHQRTH, YDCNHCGKSFNHKTNLNKHERIH, YSCSQCGKNFRQNSHRSRHEGIH, FKCPECGKTFPKNEEFVLHLQSH, and YGCKKCGRRFGRLSNCTRHEKTH.

In terms of assembly, interacts (via C-terminus) with PRMT3 (via zinc-finger); the interaction is direct and required to localize protein arginine N-methyltransferase PRMT3 to the nucleus and inhibit its proteasomal degradation. In terms of tissue distribution, highly expressed in testis, weakly expressed in spleen, thymus, prostate, ovary, small intestine colon and peripheral blood leukocytes.

The protein resides in the nucleus. Its function is as follows. Localizes protein arginine N-methyltransferase PRMT3 to the nucleus. The polypeptide is Zinc finger protein 200 (ZNF200) (Homo sapiens (Human)).